Here is a 613-residue protein sequence, read N- to C-terminus: Myosin light chain kinase 2, skeletal/cardiac muscle (613 aa).

The span at 1-20 shows a compositional bias: polar residues; that stretch reads MTTENGAVELGSQSLSTEQT. The disordered stretch occupies residues 1–168; the sequence is MTTENGAVEL…RGSPAFLHSP (168 aa). The segment covering 32-55 has biased composition (basic and acidic residues); sequence SEKEPSAPATEKDLSPPNAKKDPG. Positions 56 to 66 are enriched in pro residues; the sequence is APDPKNNPDPP. Over residues 67–83 the composition is skewed to basic and acidic residues; that stretch reads SLKKDPAKAPGPEKKGD. Positions 95–105 are enriched in gly residues; sequence SGEGDGGGGPA. The span at 106–122 shows a compositional bias: low complexity; that stretch reads EGSEGPPAALPLPTATA. Residues 145-158 are compositionally biased toward basic and acidic residues; the sequence is KAGKKAAECREAGR. Residues Ser161, Ser167, and Ser169 each carry the phosphoserine modification. The interval 219–240 is disordered; that stretch reads EKKKEEAEKASGQAGQAKVQGD. Residues 302–557 enclose the Protein kinase domain; sequence MNSKEALGGG…AEQCLAHPWL (256 aa). Residues 308–316 and Lys331 each bind ATP; that span reads LGGGKFGAV. Asp423 functions as the Proton acceptor in the catalytic mechanism. Residue Thr462 is modified to Phosphothreonine. Residues 591–603 are calmodulin-binding; that stretch reads IAVSAANRFKKIS.

The protein belongs to the protein kinase superfamily. CAMK Ser/Thr protein kinase family. As to quaternary structure, may interact with centrin.

The protein localises to the cytoplasm. The enzyme catalyses L-seryl-[myosin light chain] + ATP = O-phospho-L-seryl-[myosin light chain] + ADP + H(+). It carries out the reaction L-threonyl-[myosin light chain] + ATP = O-phospho-L-threonyl-[myosin light chain] + ADP + H(+). In terms of biological role, implicated in the level of global muscle contraction and cardiac function. Phosphorylates a specific serine in the N-terminus of a myosin light chain. The sequence is that of Myosin light chain kinase 2, skeletal/cardiac muscle (Mylk2) from Mus musculus (Mouse).